Here is a 216-residue protein sequence, read N- to C-terminus: ATP phosphoribosyltransferase (216 aa).

It belongs to the ATP phosphoribosyltransferase family. Short subfamily. In terms of assembly, heteromultimer composed of HisG and HisZ subunits.

Its subcellular location is the cytoplasm. The catalysed reaction is 1-(5-phospho-beta-D-ribosyl)-ATP + diphosphate = 5-phospho-alpha-D-ribose 1-diphosphate + ATP. Its pathway is amino-acid biosynthesis; L-histidine biosynthesis; L-histidine from 5-phospho-alpha-D-ribose 1-diphosphate: step 1/9. Its function is as follows. Catalyzes the condensation of ATP and 5-phosphoribose 1-diphosphate to form N'-(5'-phosphoribosyl)-ATP (PR-ATP). Has a crucial role in the pathway because the rate of histidine biosynthesis seems to be controlled primarily by regulation of HisG enzymatic activity. This chain is ATP phosphoribosyltransferase, found in Thiobacillus denitrificans (strain ATCC 25259 / T1).